The chain runs to 746 residues: Polyribonucleotide nucleotidyltransferase (746 aa).

2 residues coordinate Mg(2+): Asp515 and Asp521. Residues 581 to 640 (PRVIAVKIPVDKIGEVIGPKGKMINQIQEDTGADISIEDDGTVYIGATNGPSADAARSAI) enclose the KH domain. The S1 motif domain occupies 652–724 (GERYLGTVVK…DRGKLSLSPV (73 aa)).

Belongs to the polyribonucleotide nucleotidyltransferase family. The cofactor is Mg(2+).

The protein localises to the cytoplasm. It carries out the reaction RNA(n+1) + phosphate = RNA(n) + a ribonucleoside 5'-diphosphate. Functionally, involved in mRNA degradation. Catalyzes the phosphorolysis of single-stranded polyribonucleotides processively in the 3'- to 5'-direction. This chain is Polyribonucleotide nucleotidyltransferase, found in Renibacterium salmoninarum (strain ATCC 33209 / DSM 20767 / JCM 11484 / NBRC 15589 / NCIMB 2235).